Here is a 572-residue protein sequence, read N- to C-terminus: Formate--tetrahydrofolate ligase (572 aa).

65–72 (TPLGEGKT) contributes to the ATP binding site.

The protein belongs to the formate--tetrahydrofolate ligase family.

The catalysed reaction is (6S)-5,6,7,8-tetrahydrofolate + formate + ATP = (6R)-10-formyltetrahydrofolate + ADP + phosphate. It functions in the pathway one-carbon metabolism; tetrahydrofolate interconversion. In Chloroflexus aggregans (strain MD-66 / DSM 9485), this protein is Formate--tetrahydrofolate ligase.